We begin with the raw amino-acid sequence, 615 residues long: Dolichyl-diphosphooligosaccharide--protein glycosyltransferase subunit 1A (615 aa).

The first 28 residues, 1–28 (MATPPPLRRVAALLLLLVAAASTPTARA), serve as a signal peptide directing secretion. The Lumenal segment spans residues 29 to 437 (DLVVTRADRK…RFNNISLLRE (409 aa)). Lys187 is modified (N6-acetyllysine). Asn300, Asn353, and Asn431 each carry an N-linked (GlcNAc...) asparagine glycan. Residues 438–455 (PMMLITGFFLLFMACIVY) traverse the membrane as a helical segment. The Cytoplasmic segment spans residues 456 to 615 (MRTDMSISKN…ESLLEYISEI (160 aa)).

It belongs to the OST1 family. In terms of assembly, component of the oligosaccharyltransferase (OST) complex.

Its subcellular location is the endoplasmic reticulum membrane. It participates in protein modification; protein glycosylation. Its function is as follows. Subunit of the oligosaccharyl transferase (OST) complex that catalyzes the initial transfer of a defined glycan (Glc(3)Man(9)GlcNAc(2) in eukaryotes) from the lipid carrier dolichol-pyrophosphate to an asparagine residue within an Asn-X-Ser/Thr consensus motif in nascent polypeptide chains, the first step in protein N-glycosylation. N-glycosylation occurs cotranslationally and the complex associates with the Sec61 complex at the channel-forming translocon complex that mediates protein translocation across the endoplasmic reticulum (ER). All subunits are required for a maximal enzyme activity. This is Dolichyl-diphosphooligosaccharide--protein glycosyltransferase subunit 1A (OST1A) from Oryza sativa subsp. japonica (Rice).